The chain runs to 463 residues: mRNA-capping enzyme subunit alpha (463 aa).

Catalysis depends on lysine 66, which acts as the N6-GMP-lysine intermediate. Positions 404–463 (WEERKSKKRTHSSISGPMLPPVAETKAPREATQSRYIDDEDWSDEADDDDEDSLKRARIE) are disordered. Over residues 441–455 (DDEDWSDEADDDDED) the composition is skewed to acidic residues.

Belongs to the eukaryotic GTase family. As to quaternary structure, heterodimer. The mRNA-capping enzyme is composed of two separate chains alpha and beta, respectively a mRNA guanylyltransferase and an mRNA 5'-triphosphate monophosphatase.

The protein localises to the nucleus. It catalyses the reaction a 5'-end diphospho-ribonucleoside in mRNA + GTP + H(+) = a 5'-end (5'-triphosphoguanosine)-ribonucleoside in mRNA + diphosphate. Its function is as follows. Second step of mRNA capping. Transfer of the GMP moiety of GTP to the 5'-end of RNA via an enzyme-GMP covalent reaction intermediate. The sequence is that of mRNA-capping enzyme subunit alpha (CEG1) from Eremothecium gossypii (strain ATCC 10895 / CBS 109.51 / FGSC 9923 / NRRL Y-1056) (Yeast).